The primary structure comprises 230 residues: Large ribosomal subunit protein uL1c (230 aa).

It belongs to the universal ribosomal protein uL1 family. Part of the 50S ribosomal subunit.

Its subcellular location is the plastid. The protein localises to the chloroplast. Its function is as follows. Binds directly to 23S rRNA. Might be involved in E site tRNA release (Potential). This chain is Large ribosomal subunit protein uL1c (rpl1), found in Trieres chinensis (Marine centric diatom).